The primary structure comprises 148 residues: Large ribosomal subunit protein uL22 (148 aa).

This sequence belongs to the universal ribosomal protein uL22 family. Part of the 50S ribosomal subunit.

In terms of biological role, this protein binds specifically to 23S rRNA; its binding is stimulated by other ribosomal proteins, e.g. L4, L17, and L20. It is important during the early stages of 50S assembly. It makes multiple contacts with different domains of the 23S rRNA in the assembled 50S subunit and ribosome. Its function is as follows. The globular domain of the protein is located near the polypeptide exit tunnel on the outside of the subunit, while an extended beta-hairpin is found that lines the wall of the exit tunnel in the center of the 70S ribosome. The protein is Large ribosomal subunit protein uL22 of Thermosipho africanus (strain TCF52B).